We begin with the raw amino-acid sequence, 150 residues long: Putative esterase VC_A0580 (150 aa).

Belongs to the thioesterase PaaI family.

The polypeptide is Putative esterase VC_A0580 (Vibrio cholerae serotype O1 (strain ATCC 39315 / El Tor Inaba N16961)).